Here is a 305-residue protein sequence, read N- to C-terminus: Tyrosine recombinase XerC (305 aa).

The Core-binding (CB) domain occupies 4 to 95; sequence ISIQELIKQW…TVKNFYKFLE (92 aa). A Tyr recombinase domain is found at 116–298; the sequence is LLPKALSVDD…SIKHLEAVYN (183 aa). Residues arginine 159, lysine 182, histidine 250, arginine 253, and histidine 276 contribute to the active site. Tyrosine 285 acts as the O-(3'-phospho-DNA)-tyrosine intermediate in catalysis.

The protein belongs to the 'phage' integrase family. XerC subfamily. As to quaternary structure, forms a cyclic heterotetrameric complex composed of two molecules of XerC and two molecules of XerD.

It localises to the cytoplasm. In terms of biological role, site-specific tyrosine recombinase, which acts by catalyzing the cutting and rejoining of the recombining DNA molecules. The XerC-XerD complex is essential to convert dimers of the bacterial chromosome into monomers to permit their segregation at cell division. It also contributes to the segregational stability of plasmids. The protein is Tyrosine recombinase XerC of Rickettsia typhi (strain ATCC VR-144 / Wilmington).